Reading from the N-terminus, the 104-residue chain is Large ribosomal subunit protein uL24 (104 aa).

This sequence belongs to the universal ribosomal protein uL24 family. As to quaternary structure, part of the 50S ribosomal subunit.

In terms of biological role, one of two assembly initiator proteins, it binds directly to the 5'-end of the 23S rRNA, where it nucleates assembly of the 50S subunit. Functionally, one of the proteins that surrounds the polypeptide exit tunnel on the outside of the subunit. The chain is Large ribosomal subunit protein uL24 from Psychromonas ingrahamii (strain DSM 17664 / CCUG 51855 / 37).